The sequence spans 208 residues: MATTTATTPPSLTDIRALKYTSSTVSVASPAEIEAITKTWAETFKIPNDVLPLACWDLARAFADVGASSKSELTGDSAALAGVSRKQLAQAIKIHCTIRQFCMYFANVVWNIMLDTKTPPASWSKLGYKEESKFAGFDFFDGVNHPAALMPADGLIRGPSEAELLAHQTAKQVALHRDAKRRGTNVVNSVEITNGRSDPIGPLITYPQ.

It belongs to the potexvirus capsid protein family.

It localises to the virion. In terms of biological role, required for genome encapsidation. Forms ribonucleoprotein complexes along with TGB1 helicase and viral RNA. This Trifolium (WCMV) protein is Coat protein.